The chain runs to 947 residues: Serine-aspartate repeat-containing protein C (947 aa).

The N-terminal stretch at 1–50 (MNNKKTATNRKGMIPNRLNKFSIRKYSVGTASILVGTTLIFGLSGHEAKA) is a signal peptide. A disordered region spans residues 51–164 (AEHTNGELNQ…STTPKTTTIK (114 aa)). Residues 51–495 (AEHTNGELNQ…GSSTANGDQK (445 aa)) form a ligand binding A region region. Polar residues predominate over residues 56–71 (GELNQSKNETTAPSEN). A compositionally biased stretch (basic and acidic residues) spans 72–83 (KTTKKVDSRQLK). Residues 84–155 (DNTQTATADQ…SNLTQAKDVS (72 aa)) show a composition bias toward polar residues. 2 consecutive CNA-B domains span residues 496-606 (KYNL…YKTP) and 607-717 (KYSL…EEET). The interval 678 to 927 (TQTGTNTTED…NNSNNGTLFG (250 aa)) is disordered. Composition is skewed to acidic residues over residues 685-695 (TEDDKDADGGE) and 712-886 (YYEE…DSDS). The LPXTG sorting signal motif lies at 910–914 (LPETG). The span at 912–927 (ETGSENNNSNNGTLFG) shows a compositional bias: low complexity. Threonine 913 is modified (pentaglycyl murein peptidoglycan amidated threonine). Residues 914–947 (GSENNNSNNGTLFGGLFAALGSLLLFGRRKKQNK) constitute a propeptide, removed by sortase.

Belongs to the serine-aspartate repeat-containing protein (SDr) family. Homodimerizes; via N2-Domain. Interacts with host NRXN1; this interaction mediates bacterial attachment to host cells.

It is found in the secreted. Its subcellular location is the cell wall. Functionally, cell surface-associated calcium-binding protein which plays an important role in adhesion and pathogenesis. Mediates interactions with components of the extracellular matrix such as host NRXN1 to promote bacterial adhesion. The chain is Serine-aspartate repeat-containing protein C (sdrC) from Staphylococcus aureus (strain COL).